A 113-amino-acid chain; its full sequence is MSDIIARGNVENGDKLFKARCAQCHTTANGAPNKQGPNLYGLFFPKSRSFPGYAYSDPNKNTGKFCIMWGEQTLFDYLENPKKYIPKTKMAFAGFKSEQDRADVVAYLEQSTK.

Positions 21, 24, 25, and 90 each coordinate heme c.

This sequence belongs to the cytochrome c family. In terms of processing, binds 1 heme c group covalently per subunit.

It is found in the mitochondrion intermembrane space. In terms of biological role, electron carrier protein. The oxidized form of the cytochrome c heme group can accept an electron from the heme group of the cytochrome c1 subunit of cytochrome reductase. Cytochrome c then transfers this electron to the cytochrome oxidase complex, the final protein carrier in the mitochondrial electron-transport chain. This is Cytochrome c (cytC) from Dictyostelium discoideum (Social amoeba).